We begin with the raw amino-acid sequence, 342 residues long: Heat-inducible transcription repressor HrcA (342 aa).

Belongs to the HrcA family.

Its function is as follows. Negative regulator of class I heat shock genes (grpE-dnaK-dnaJ and groELS operons). Prevents heat-shock induction of these operons. In Corynebacterium efficiens (strain DSM 44549 / YS-314 / AJ 12310 / JCM 11189 / NBRC 100395), this protein is Heat-inducible transcription repressor HrcA.